Consider the following 244-residue polypeptide: 2-C-methyl-D-erythritol 4-phosphate cytidylyltransferase (244 aa).

Belongs to the IspD/TarI cytidylyltransferase family. IspD subfamily.

The catalysed reaction is 2-C-methyl-D-erythritol 4-phosphate + CTP + H(+) = 4-CDP-2-C-methyl-D-erythritol + diphosphate. It functions in the pathway isoprenoid biosynthesis; isopentenyl diphosphate biosynthesis via DXP pathway; isopentenyl diphosphate from 1-deoxy-D-xylulose 5-phosphate: step 2/6. In terms of biological role, catalyzes the formation of 4-diphosphocytidyl-2-C-methyl-D-erythritol from CTP and 2-C-methyl-D-erythritol 4-phosphate (MEP). The polypeptide is 2-C-methyl-D-erythritol 4-phosphate cytidylyltransferase (Solibacter usitatus (strain Ellin6076)).